Here is a 339-residue protein sequence, read N- to C-terminus: DNA-directed RNA polymerase subunit alpha (339 aa).

The interval 1–233 (MVREEVAGST…DLFLPFLHAE (233 aa)) is alpha N-terminal domain (alpha-NTD). An alpha C-terminal domain (alpha-CTD) region spans residues 264 to 339 (KKGIPLNYIF…IDLLKNKLSF (76 aa)).

It belongs to the RNA polymerase alpha chain family. As to quaternary structure, in plastids the minimal PEP RNA polymerase catalytic core is composed of four subunits: alpha, beta, beta', and beta''. When a (nuclear-encoded) sigma factor is associated with the core the holoenzyme is formed, which can initiate transcription.

It is found in the plastid. It localises to the chloroplast. It carries out the reaction RNA(n) + a ribonucleoside 5'-triphosphate = RNA(n+1) + diphosphate. Functionally, DNA-dependent RNA polymerase catalyzes the transcription of DNA into RNA using the four ribonucleoside triphosphates as substrates. The sequence is that of DNA-directed RNA polymerase subunit alpha from Psathyrostachys rupestris (Hordeum rupestre).